A 732-amino-acid polypeptide reads, in one-letter code: X-ray repair cross-complementing protein 5 (732 aa).

Residues 9–231 (AVVLCMDVGF…DEIYSFSESL (223 aa)) form the VWFA domain. A leucine-zipper region spans residues 138–165 (LSSRFSKSQLDIIIHSLKKCDISLQFFL). Lysine 144 carries the post-translational modification N6-acetyllysine. Residue lysine 195 forms a Glycyl lysine isopeptide (Lys-Gly) (interchain with G-Cter in SUMO2) linkage. The region spanning 253-452 (IGSNLSIRIA…KYAPTEAQLN (200 aa)) is the Ku domain. 2 positions are modified to phosphoserine: serine 255 and serine 258. N6-acetyllysine is present on lysine 265. The residue at position 318 (serine 318) is a Phosphoserine. The residue at position 332 (lysine 332) is an N6-acetyllysine. Glycyl lysine isopeptide (Lys-Gly) (interchain with G-Cter in SUMO2) cross-links involve residues lysine 532 and lysine 534. Phosphothreonine is present on threonine 535. Glycyl lysine isopeptide (Lys-Gly) (interchain with G-Cter in SUMO2) cross-links involve residues lysine 566 and lysine 568. Serine 577, serine 579, and serine 580 each carry phosphoserine; by PRKDC. Lysine 660 and lysine 665 each carry N6-acetyllysine. Glycyl lysine isopeptide (Lys-Gly) (interchain with G-Cter in SUMO2) cross-links involve residues lysine 669 and lysine 688. Threonine 715 is subject to Phosphothreonine; by PRKDC. Positions 720–728 (EEGGDVDDL) match the EEXXXDL motif motif.

The protein belongs to the ku80 family. Heterodimer composed of XRCC5/Ku80 and XRCC6/Ku70; heterodimerization stabilizes XRCC5 protein. Component of the core long-range non-homologous end joining (NHEJ) complex (also named DNA-PK complex) composed of PRKDC, LIG4, XRCC4, XRCC6/Ku70, XRCC5/Ku86 and NHEJ1/XLF. Additional component of the NHEJ complex includes PAXX. Following autophosphorylation, PRKDC dissociates from DNA, leading to formation of the short-range NHEJ complex, composed of LIG4, XRCC4, XRCC6/Ku70, XRCC5/Ku86 and NHEJ1/XLF. The XRCC5-XRCC6 dimer also associates with NAA15, and this complex displays DNA binding activity towards the osteocalcin FGF response element (OCFRE). In addition, XRCC5 binds to the osteoblast-specific transcription factors MSX2 and RUNX2. Interacts with ELF3. Interacts with APLF (via KBM motif). The XRCC5/XRCC6 dimer associates in a DNA-dependent manner with APEX1. Identified in a complex with DEAF1 and XRCC6. Interacts with NR4A3; the DNA-dependent protein kinase complex DNA-PK phosphorylates and activates NR4A3 and prevents NR4A3 ubiquitinylation and degradation. Interacts with RNF138. Interacts with CYREN isoform 1 (CYREN-1) and isoform 4 (CYREN-2) (via KBM motif). Interacts with WRN (via KBM motif). Interacts (via N-terminus) with HSF1 (via N-terminus); this interaction is direct and prevents XRCC5/XRCC6 heterodimeric binding and non-homologous end joining (NHEJ) repair activities induced by ionizing radiation (IR). Interacts with DHX9; this interaction occurs in a RNA-dependent manner. Part of the HDP-RNP complex composed of at least HEXIM1, PRKDC, XRCC5, XRCC6, paraspeckle proteins (SFPQ, NONO, PSPC1, RBM14, and MATR3) and NEAT1 RNA. Interacts with ERCC6. The XRCC5-XRCC6 dimer associates with ALKBH2. Interacts with TPRN; TPRN interacts with a number of DNA damage response proteins, is recruited to sites of DNA damage and may play a role in DNA damage repair. Interacts with ERCC6L2. In terms of assembly, (Microbial infection) Interacts with human T-cell leukemia virus 1/HTLV-1 protein HBZ. Post-translationally, ADP-ribosylated by PARP3. Phosphorylated on serine residues. Phosphorylation by PRKDC may enhance helicase activity. In terms of processing, sumoylated. Post-translationally, ubiquitinated by RNF8 via 'Lys-48'-linked ubiquitination following DNA damage, leading to its degradation and removal from DNA damage sites. Ubiquitinated by RNF138, leading to remove the Ku complex from DNA breaks.

The protein resides in the nucleus. Its subcellular location is the nucleolus. The protein localises to the chromosome. In terms of biological role, single-stranded DNA-dependent ATP-dependent helicase that plays a key role in DNA non-homologous end joining (NHEJ) by recruiting DNA-PK to DNA. Required for double-strand break repair and V(D)J recombination. Also has a role in chromosome translocation. The DNA helicase II complex binds preferentially to fork-like ends of double-stranded DNA in a cell cycle-dependent manner. It works in the 3'-5' direction. During NHEJ, the XRCC5-XRRC6 dimer performs the recognition step: it recognizes and binds to the broken ends of the DNA and protects them from further resection. Binding to DNA may be mediated by XRCC6. The XRCC5-XRRC6 dimer acts as a regulatory subunit of the DNA-dependent protein kinase complex DNA-PK by increasing the affinity of the catalytic subunit PRKDC to DNA by 100-fold. The XRCC5-XRRC6 dimer is probably involved in stabilizing broken DNA ends and bringing them together. The assembly of the DNA-PK complex to DNA ends is required for the NHEJ ligation step. The XRCC5-XRRC6 dimer probably also acts as a 5'-deoxyribose-5-phosphate lyase (5'-dRP lyase), by catalyzing the beta-elimination of the 5' deoxyribose-5-phosphate at an abasic site near double-strand breaks. XRCC5 probably acts as the catalytic subunit of 5'-dRP activity, and allows to 'clean' the termini of abasic sites, a class of nucleotide damage commonly associated with strand breaks, before such broken ends can be joined. The XRCC5-XRRC6 dimer together with APEX1 acts as a negative regulator of transcription. In association with NAA15, the XRCC5-XRRC6 dimer binds to the osteocalcin promoter and activates osteocalcin expression. As part of the DNA-PK complex, involved in the early steps of ribosome assembly by promoting the processing of precursor rRNA into mature 18S rRNA in the small-subunit processome. Binding to U3 small nucleolar RNA, recruits PRKDC and XRCC5/Ku86 to the small-subunit processome. Plays a role in the regulation of DNA virus-mediated innate immune response by assembling into the HDP-RNP complex, a complex that serves as a platform for IRF3 phosphorylation and subsequent innate immune response activation through the cGAS-STING pathway. The protein is X-ray repair cross-complementing protein 5 (XRCC5) of Homo sapiens (Human).